We begin with the raw amino-acid sequence, 270 residues long: MAAPGEALTQSGYIEHHLTNLSLAKLGLVADEASFWNVHIDSLFFSVFTGMLFLWVFRSVAKKATTGVPGKLQCFVEMIVEFVADNVKETFHGRNPLIAPLALTIFCWVILMNLMDLVPIDFLPYPAEHWLGIPYLKVVPSADVNITMAMALGVFALMIYYSIKVKGLGGFAKELALHPFNHPIMIPFNLLLEVISLLAKPLSLGMRLFGNMFAGEVVFILIAAMLPWYLQWVGALPWAIFHILVILIQAFVFMMLTIVYLSMAHEDSDH.

5 helical membrane-spanning segments follow: residues 37 to 57 (NVHIDSLFFSVFTGMLFLWVF), 98 to 118 (IAPLALTIFCWVILMNLMDLV), 143 to 163 (DVNITMAMALGVFALMIYYSI), 217 to 237 (VVFILIAAMLPWYLQWVGALP), and 239 to 259 (AIFHILVILIQAFVFMMLTIV).

Belongs to the ATPase A chain family. As to quaternary structure, F-type ATPases have 2 components, CF(1) - the catalytic core - and CF(0) - the membrane proton channel. CF(1) has five subunits: alpha(3), beta(3), gamma(1), delta(1), epsilon(1). CF(0) has three main subunits: a(1), b(2) and c(9-12). The alpha and beta chains form an alternating ring which encloses part of the gamma chain. CF(1) is attached to CF(0) by a central stalk formed by the gamma and epsilon chains, while a peripheral stalk is formed by the delta and b chains.

Its subcellular location is the cell inner membrane. Its function is as follows. Key component of the proton channel; it plays a direct role in the translocation of protons across the membrane. In Aliivibrio fischeri (strain ATCC 700601 / ES114) (Vibrio fischeri), this protein is ATP synthase subunit a.